We begin with the raw amino-acid sequence, 443 residues long: Threonine/serine transporter TdcC (443 aa).

11 consecutive transmembrane segments (helical) span residues 22–42 (TTWT…FFPI), 44–64 (AGFG…PIAF), 97–117 (GVVI…IYGV), 140–160 (FVAL…KDLM), 163–183 (VMSY…LSLI), 207–227 (ILVT…FSPI), 259–279 (ASML…FTLS), 319–339 (ASII…LGTL), 366–386 (ISMI…PNIL), 389–409 (IEAM…MYAI), and 423–443 (DNVF…YKLF).

It belongs to the amino acid/polyamine transporter 2 family. SdaC/TdcC subfamily.

Its subcellular location is the cell inner membrane. The enzyme catalyses L-threonine(in) + H(+)(in) = L-threonine(out) + H(+)(out). It carries out the reaction L-serine(in) + H(+)(in) = L-serine(out) + H(+)(out). Functionally, involved in the import of threonine and serine into the cell, with the concomitant import of a proton (symport system). This chain is Threonine/serine transporter TdcC, found in Salmonella paratyphi B (strain ATCC BAA-1250 / SPB7).